The primary structure comprises 295 residues: Mediator of RNA polymerase II transcription subunit 6 (295 aa).

Residues 211–243 (TATAATNGNNAGGGSNKSSVRPTGGANMATVPS) are disordered. Position 225 is a phosphoserine (S225).

This sequence belongs to the Mediator complex subunit 6 family. As to quaternary structure, component of the Mediator complex, which is composed of at least 21 subunits that form three structurally distinct submodules. The Mediator head module contains MED6, MED8, MED11, SRB4/MED17, SRB5/MED18, ROX3/MED19, SRB2/MED20 and SRB6/MED22, the middle module contains MED1, MED4, NUT1/MED5, MED7, CSE2/MED9, NUT2/MED10, SRB7/MED21 and SOH1/MED31, and the tail module contains MED2, PGD1/MED3, RGR1/MED14, GAL11/MED15 and SIN4/MED16. The head and the middle modules interact directly with RNA polymerase II, whereas the elongated tail module interacts with gene-specific regulatory proteins. MED6 interacts directly with SRB4/MED17 and SRB7/MED21.

The protein resides in the nucleus. Its function is as follows. Component of the Mediator complex, a coactivator involved in the regulated transcription of nearly all RNA polymerase II-dependent genes. Mediator functions as a bridge to convey information from gene-specific regulatory proteins to the basal RNA polymerase II transcription machinery. The Mediator complex, having a compact conformation in its free form, is recruited to promoters by direct interactions with regulatory proteins and serves for the assembly of a functional preinitiation complex with RNA polymerase II and the general transcription factors. The Mediator complex unfolds to an extended conformation and partially surrounds RNA polymerase II, specifically interacting with the unphosphorylated form of the C-terminal domain (CTD) of RNA polymerase II. The Mediator complex dissociates from the RNA polymerase II holoenzyme and stays at the promoter when transcriptional elongation begins. This Saccharomyces cerevisiae (strain ATCC 204508 / S288c) (Baker's yeast) protein is Mediator of RNA polymerase II transcription subunit 6 (MED6).